The sequence spans 120 residues: UPF0102 protein CBU_1742 (120 aa).

It belongs to the UPF0102 family.

The protein is UPF0102 protein CBU_1742 of Coxiella burnetii (strain RSA 493 / Nine Mile phase I).